The primary structure comprises 594 residues: UvrABC system protein C (594 aa).

The region spanning 14–91 (DQPGCYLMKD…IKKHDPKYNI (78 aa)) is the GIY-YIG domain. Residues 196–231 (KEVRSELETKMYEASEKLEFERAKELRDQIAHIDAI) form the UVR domain.

It belongs to the UvrC family. In terms of assembly, interacts with UvrB in an incision complex.

The protein resides in the cytoplasm. Functionally, the UvrABC repair system catalyzes the recognition and processing of DNA lesions. UvrC both incises the 5' and 3' sides of the lesion. The N-terminal half is responsible for the 3' incision and the C-terminal half is responsible for the 5' incision. The protein is UvrABC system protein C of Bacillus cereus (strain Q1).